The sequence spans 285 residues: 3-methyl-2-oxobutanoate hydroxymethyltransferase (285 aa).

The tract at residues 1-22 (MSEHNVYGAAQPAQPGQPAQPR) is disordered. Positions 8-21 (GAAQPAQPGQPAQP) are enriched in low complexity. Residues Asp66 and Asp105 each coordinate Mg(2+). 3-methyl-2-oxobutanoate is bound by residues 66–67 (DS), Asp105, and Lys135. Glu137 lines the Mg(2+) pocket. The active-site Proton acceptor is Glu203.

The protein belongs to the PanB family. Homodecamer; pentamer of dimers. Mg(2+) is required as a cofactor.

It localises to the cytoplasm. It carries out the reaction 3-methyl-2-oxobutanoate + (6R)-5,10-methylene-5,6,7,8-tetrahydrofolate + H2O = 2-dehydropantoate + (6S)-5,6,7,8-tetrahydrofolate. It participates in cofactor biosynthesis; (R)-pantothenate biosynthesis; (R)-pantoate from 3-methyl-2-oxobutanoate: step 1/2. Catalyzes the reversible reaction in which hydroxymethyl group from 5,10-methylenetetrahydrofolate is transferred onto alpha-ketoisovalerate to form ketopantoate. The polypeptide is 3-methyl-2-oxobutanoate hydroxymethyltransferase (Mycolicibacterium paratuberculosis (strain ATCC BAA-968 / K-10) (Mycobacterium paratuberculosis)).